Consider the following 142-residue polypeptide: MSLTRTERTIILSLWSKISTQADVIGTETLERLFSCYPQAKTYFPHFDLHSGSAQLRAHGSKVVAAVGDAVKSIDNVTSALSKLSELHAYVLRVDPVNFKFLSHCLLVTLASHFPADFTADAHAAWDKFLSIVSGVLTEKYR.

The residue at position 2 (Ser2) is an N-acetylserine. The 141-residue stretch at 2–142 folds into the Globin domain; sequence SLTRTERTII…VSGVLTEKYR (141 aa). The residue at position 29 (Thr29) is a Phosphothreonine. Ser53 carries the phosphoserine modification. Position 59 (His59) interacts with heme b. Residues Ser73 and Ser82 each carry the phosphoserine modification. His88 lines the heme b pocket.

This sequence belongs to the globin family. Heterotetramer of two zeta chains and beta-type chains.

The zeta chain is an alpha-type chain of mammalian embryonic hemoglobin. The sequence is that of Hemoglobin subunit zeta (HBZ1) from Capra hircus (Goat).